A 74-amino-acid polypeptide reads, in one-letter code: ATP synthase subunit c (74 aa).

The next 2 membrane-spanning stretches (helical) occupy residues 8 to 28 (FIGIGLMAIGIYGAALGVSNI) and 52 to 72 (IGAGLAEAMGLFSFVIAMLLI).

Belongs to the ATPase C chain family. In terms of assembly, F-type ATPases have 2 components, F(1) - the catalytic core - and F(0) - the membrane proton channel. F(1) has five subunits: alpha(3), beta(3), gamma(1), delta(1), epsilon(1). F(0) has three main subunits: a(1), b(2) and c(10-14). The alpha and beta chains form an alternating ring which encloses part of the gamma chain. F(1) is attached to F(0) by a central stalk formed by the gamma and epsilon chains, while a peripheral stalk is formed by the delta and b chains.

It is found in the cell inner membrane. Its function is as follows. F(1)F(0) ATP synthase produces ATP from ADP in the presence of a proton or sodium gradient. F-type ATPases consist of two structural domains, F(1) containing the extramembraneous catalytic core and F(0) containing the membrane proton channel, linked together by a central stalk and a peripheral stalk. During catalysis, ATP synthesis in the catalytic domain of F(1) is coupled via a rotary mechanism of the central stalk subunits to proton translocation. Functionally, key component of the F(0) channel; it plays a direct role in translocation across the membrane. A homomeric c-ring of between 10-14 subunits forms the central stalk rotor element with the F(1) delta and epsilon subunits. The protein is ATP synthase subunit c of Rickettsia akari (strain Hartford).